A 932-amino-acid polypeptide reads, in one-letter code: Ribosome biogenesis protein ERB1 (932 aa).

Low complexity predominate over residues 1-18 (MVRPSSSSSASASAARSG). Residues 1 to 229 (MVRPSSSSSA…RSQAAQAFDL (229 aa)) form a disordered region. A compositionally biased stretch (polar residues) spans 27–36 (PTATNPTTRA). 2 stretches are compositionally biased toward acidic residues: residues 57-119 (VSDD…EVDS) and 150-172 (DNSD…DEDE). Over residues 175–184 (SAFAARSDAS) the composition is skewed to low complexity. WD repeat units follow at residues 555–594 (PDGG…CTAS) and 604–644 (AERS…NYAK). Residues 679-698 (SMPSKPDARSPVAWTRPSEA) are disordered. WD repeat units lie at residues 762 to 800 (SKGS…LIKT), 803 to 842 (SGFK…RPYK), 846 to 885 (YHAR…DYGE), and 901 to 932 (KNGL…LWTT).

It belongs to the WD repeat BOP1/ERB1 family. As to quaternary structure, component of the NOP7 complex, composed of ERB1, NOP7 and YTM1. The complex is held together by ERB1, which interacts with NOP7 via its N-terminal domain and with YTM1 via a high-affinity interaction between the seven-bladed beta-propeller domains of the 2 proteins. The NOP7 complex associates with the 66S pre-ribosome.

It is found in the nucleus. It localises to the nucleolus. Its subcellular location is the nucleoplasm. Functionally, component of the NOP7 complex, which is required for maturation of the 25S and 5.8S ribosomal RNAs and formation of the 60S ribosome. This chain is Ribosome biogenesis protein ERB1, found in Mycosarcoma maydis (Corn smut fungus).